A 1027-amino-acid polypeptide reads, in one-letter code: D-2-hydroxyglutarate dehydrogenase (1027 aa).

The FAD-binding PCMH-type domain occupies Tyr48 to Ile284. The (R)-2-hydroxyglutarate site is built by Arg405 and His503. Residues His665–Lys696 form the 4Fe-4S ferredoxin-type domain. Positions 674, 677, 680, and 684 each coordinate [4Fe-4S] cluster.

This sequence in the N-terminal section; belongs to the FAD-binding oxidoreductase/transferase type 4 family. As to quaternary structure, homotetramer. [4Fe-4S] cluster is required as a cofactor. It depends on FAD as a cofactor.

The catalysed reaction is (R)-2-hydroxyglutarate + A = 2-oxoglutarate + AH2. In terms of biological role, catalyzes the oxidation of D-2-hydroxyglutarate (D-2-HGA) to 2-oxoglutarate. Provides the way to recycle D-2-HGA produced during L-serine synthesis by SerA, by converting it back to 2-oxoglutarate. The physiological molecule that functions as the primary electron acceptor during D-2-HGA oxidation is unknown. The sequence is that of D-2-hydroxyglutarate dehydrogenase from Haemophilus influenzae (strain ATCC 51907 / DSM 11121 / KW20 / Rd).